Consider the following 296-residue polypeptide: Diguanylate cyclase DgcZ (296 aa).

Histidine 22, cysteine 52, histidine 79, and histidine 83 together coordinate Zn(2+). The GGDEF domain maps to 157-289; it reads LNLYLMLLDI…GRNRCMFIDE (133 aa). Mg(2+) is bound by residues aspartate 165 and isoleucine 166. Substrate is bound by residues asparagine 173, histidine 178, aspartate 182, and 195–200; that span reads WTRDYE. Glutamate 208 provides a ligand contact to Mg(2+). Glutamate 208 functions as the Proton acceptor in the catalytic mechanism. 3 residues coordinate substrate: lysine 215, arginine 224, and arginine 228.

Homodimer. Mg(2+) is required as a cofactor.

The catalysed reaction is 2 GTP = 3',3'-c-di-GMP + 2 diphosphate. It participates in purine metabolism; 3',5'-cyclic di-GMP biosynthesis. With respect to regulation, allosterically regulated by zinc, which seems to regulate the activity of the catalytic GGDEF domains by impeding their mobility and thus preventing productive encounter of the two GTP substrates. Subject to product inhibition by c-di-GMP at a KI of 44 uM. Its function is as follows. Catalyzes the synthesis of cyclic-di-GMP (c-di-GMP) via the condensation of 2 GTP molecules. May act as a zinc sensor that controls, via c-di-GMP, post-translational events. Overexpression leads to a strong repression of swimming; swimming returnes to normal when residues 206-207 are both mutated to Ala. Overexpression also leads to a reduction in flagellar abundance and a 20-fold increase in c-di-GMP levels in vivo. Required for aminoglycoside-mediated induction of biofilm formation, it also plays a lesser role in biofilm production in response to other classes of translation inhibitors. The c-di-GMP produced by this enzyme up-regulates poly-GlcNAc production as well as the biofilm synthesis protein PgaD, although c-di-GMP is probably not the main inducing principle. C-di-GMP is a second messenger which controls cell surface-associated traits in bacteria. The chain is Diguanylate cyclase DgcZ from Escherichia coli (strain K12).